Consider the following 1029-residue polypeptide: Error-prone DNA polymerase (1029 aa).

The protein belongs to the DNA polymerase type-C family. DnaE2 subfamily.

Its subcellular location is the cytoplasm. It carries out the reaction DNA(n) + a 2'-deoxyribonucleoside 5'-triphosphate = DNA(n+1) + diphosphate. In terms of biological role, DNA polymerase involved in damage-induced mutagenesis and translesion synthesis (TLS). It is not the major replicative DNA polymerase. This is Error-prone DNA polymerase from Saccharophagus degradans (strain 2-40 / ATCC 43961 / DSM 17024).